We begin with the raw amino-acid sequence, 452 residues long: GTPase Der (452 aa).

EngA-type G domains follow at residues 4–169 and 177–352; these read PVVA…PPQD and IQMA…EQHR. GTP is bound by residues 10-17, 57-61, 120-123, 183-190, 230-234, and 295-298; these read GRPNVGKS, DTGGL, NKCE, DTAGI, and NKWD. Positions 353–438 constitute a KH-like domain; it reads RRVTTAVVNE…PVRLFWRGKQ (86 aa).

Belongs to the TRAFAC class TrmE-Era-EngA-EngB-Septin-like GTPase superfamily. EngA (Der) GTPase family. As to quaternary structure, associates with the 50S ribosomal subunit.

Functionally, GTPase that plays an essential role in the late steps of ribosome biogenesis. This chain is GTPase Der, found in Synechococcus sp. (strain RCC307).